The chain runs to 1401 residues: Condensin complex subunit 1 (1401 aa).

Residues 1 to 603 (MAPQMYEFHL…TVCKNKPNMS (603 aa)) are interactions with SMC2 and SMC4. Phosphoserine occurs at positions 20 and 585. The span at 576 to 596 (STQEKNPRESTGNMVTGQTVC) shows a compositional bias: polar residues. Disordered stretches follow at residues 576-611 (STQE…SRGN), 956-978 (REEQ…TTME), and 1303-1401 (LEIG…RHRS). The span at 956-971 (REEQEHKTKDPKEKNT) shows a compositional bias: basic and acidic residues. The segment covering 1308-1336 (AGSQRAPSAKKPSTGSRYQPLASTASDND) has biased composition (polar residues). Residues serine 1310, serine 1315, and serine 1330 each carry the phosphoserine modification. At threonine 1331 the chain carries Phosphothreonine. Serine 1333 is subject to Phosphoserine. Threonine 1339 is modified (phosphothreonine). A Bipartite nuclear localization signal motif is present at residues 1342-1362 (PRRTTRRHPNTQQRASKKKPK). Positions 1345–1362 (TTRRHPNTQQRASKKKPK) are enriched in basic residues. Phosphoserine occurs at positions 1366, 1367, 1370, 1371, and 1376. The span at 1369–1382 (ESSEEDLSAEMTED) shows a compositional bias: acidic residues. 2 positions are modified to phosphothreonine; by CDK1: threonine 1384 and threonine 1389. Serine 1395 is subject to Phosphoserine.

It belongs to the CND1 (condensin subunit 1) family. Component of the condensin complex, which contains the SMC2 and SMC4 heterodimer, and three non SMC subunits that probably regulate the complex: NCAPH/BRRN1, NCAPD2/CAPD2 and NCAPG. Interacts with histones H1 and H3. In terms of processing, phosphorylated by CDK1. Its phosphorylation, as well as that of NCAPH and NCAPG subunits, activates the condensin complex and is required for chromosome condensation.

It localises to the nucleus. Its subcellular location is the cytoplasm. The protein localises to the chromosome. Regulatory subunit of the condensin complex, a complex required for conversion of interphase chromatin into mitotic-like condense chromosomes. The condensin complex probably introduces positive supercoils into relaxed DNA in the presence of type I topoisomerases and converts nicked DNA into positive knotted forms in the presence of type II topoisomerases. May target the condensin complex to DNA via its C-terminal domain. May promote the resolution of double-strand DNA catenanes (intertwines) between sister chromatids. Condensin-mediated compaction likely increases tension in catenated sister chromatids, providing directionality for type II topoisomerase-mediated strand exchanges toward chromatid decatenation. Required for decatenation of non-centromeric ultrafine DNA bridges during anaphase. Early in neurogenesis, may play an essential role to ensure accurate mitotic chromosome condensation in neuron stem cells, ultimately affecting neuron pool and cortex size. The protein is Condensin complex subunit 1 of Homo sapiens (Human).